A 114-amino-acid chain; its full sequence is UPF0145 protein YG5714_0873 (114 aa).

The protein belongs to the UPF0145 family.

The protein is UPF0145 protein YG5714_0873 of Saccharolobus islandicus (strain Y.G.57.14 / Yellowstone #1) (Sulfolobus islandicus).